The following is a 100-amino-acid chain: uncharacterized protein (100 aa).

Positions 65-96 (PELSKNWEKLKKEIEQKHKEIQELISEFDNMF) form a coiled coil.

This is an uncharacterized protein from Acidianus filamentous virus 2 (isolate Italy/Pozzuoli) (AFV-2).